A 547-amino-acid chain; its full sequence is Nitrosoguanidine resistance protein SNG1 (547 aa).

The interval 35-86 (NQRFAEGSGHSSDLAKSLEDYRPPDEKPSSLSSVGEGGANEEEKGGNDGGPL) is disordered. A compositionally biased stretch (basic and acidic residues) spans 50–62 (KSLEDYRPPDEKP). Thr-91 is modified (phosphothreonine). Helical transmembrane passes span 109–129 (FVLNNFFIACVCVSLISIYWG), 159–179 (ISAIIPSLLASVPGTWHIYNA), 318–338 (ILMAPLQVGLIYCILLTVLQL), 363–383 (LISWATYFLLSIGFCTVSAIF), 394–414 (GGFVVYWMSTWLVMMAVGGAN), 418–438 (LSLVIAYCPPYLSIWLMTWII), 457–477 (YGYIMPIHNAVDIYKVIFLNL), and 488–508 (ILVAWVALNTSLMPFCMKFAG). The span at 526 to 536 (ATQRASRPAEA) shows a compositional bias: low complexity. The tract at residues 526-547 (ATQRASRPAEANTDKNNNPPGN) is disordered.

This sequence to yeast YJR015W.

The protein localises to the membrane. Functionally, may function as a N-methyl-N'nitro-N-nitrosoguanidine (MNNG) export permease. The polypeptide is Nitrosoguanidine resistance protein SNG1 (SNG1) (Saccharomyces cerevisiae (strain ATCC 204508 / S288c) (Baker's yeast)).